Here is a 332-residue protein sequence, read N- to C-terminus: Biotin synthase (332 aa).

A Radical SAM core domain is found at 53-283 (WGKGGIHACS…VHPHSIIKFA (231 aa)). The [4Fe-4S] cluster site is built by cysteine 71, cysteine 75, and cysteine 78. Residues cysteine 150, cysteine 211, and lysine 281 each coordinate [2Fe-2S] cluster.

It belongs to the radical SAM superfamily. Biotin synthase family. As to quaternary structure, homodimer. [4Fe-4S] cluster is required as a cofactor. The cofactor is [2Fe-2S] cluster.

It catalyses the reaction (4R,5S)-dethiobiotin + (sulfur carrier)-SH + 2 reduced [2Fe-2S]-[ferredoxin] + 2 S-adenosyl-L-methionine = (sulfur carrier)-H + biotin + 2 5'-deoxyadenosine + 2 L-methionine + 2 oxidized [2Fe-2S]-[ferredoxin]. It functions in the pathway cofactor biosynthesis; biotin biosynthesis; biotin from 7,8-diaminononanoate: step 2/2. Its function is as follows. Catalyzes the conversion of dethiobiotin (DTB) to biotin by the insertion of a sulfur atom into dethiobiotin via a radical-based mechanism. This is Biotin synthase from Chlorobium phaeovibrioides (strain DSM 265 / 1930) (Prosthecochloris vibrioformis (strain DSM 265)).